The chain runs to 200 residues: Pyrrolidone-carboxylate peptidase (200 aa).

Active-site residues include Glu-78, Cys-141, and His-165.

Belongs to the peptidase C15 family. Homotetramer.

The protein resides in the cytoplasm. It catalyses the reaction Release of an N-terminal pyroglutamyl group from a polypeptide, the second amino acid generally not being Pro.. Removes 5-oxoproline from various penultimate amino acid residues except L-proline. This chain is Pyrrolidone-carboxylate peptidase, found in Thermococcus onnurineus (strain NA1).